The chain runs to 281 residues: 2,3,4,5-tetrahydropyridine-2,6-dicarboxylate N-succinyltransferase (281 aa).

Positions 108 and 145 each coordinate substrate.

It belongs to the transferase hexapeptide repeat family. Homotrimer.

It is found in the cytoplasm. It carries out the reaction (S)-2,3,4,5-tetrahydrodipicolinate + succinyl-CoA + H2O = (S)-2-succinylamino-6-oxoheptanedioate + CoA. It participates in amino-acid biosynthesis; L-lysine biosynthesis via DAP pathway; LL-2,6-diaminopimelate from (S)-tetrahydrodipicolinate (succinylase route): step 1/3. This is 2,3,4,5-tetrahydropyridine-2,6-dicarboxylate N-succinyltransferase from Bradyrhizobium diazoefficiens (strain JCM 10833 / BCRC 13528 / IAM 13628 / NBRC 14792 / USDA 110).